The chain runs to 117 residues: Large ribosomal subunit protein eL8 (117 aa).

This sequence belongs to the eukaryotic ribosomal protein eL8 family. In terms of assembly, part of the 50S ribosomal subunit. Probably part of the RNase P complex.

It is found in the cytoplasm. Its function is as follows. Multifunctional RNA-binding protein that recognizes the K-turn motif in ribosomal RNA, the RNA component of RNase P, box H/ACA, box C/D and box C'/D' sRNAs. The chain is Large ribosomal subunit protein eL8 from Methanococcus aeolicus (strain ATCC BAA-1280 / DSM 17508 / OCM 812 / Nankai-3).